We begin with the raw amino-acid sequence, 283 residues long: Peflin (283 aa).

8 repeat units span residues proline 21–glutamine 30, glutamine 36–proline 44, alanine 45–proline 54, serine 55–proline 62, alanine 71–glutamine 79, alanine 80–valine 87, proline 88–serine 95, and glutamine 96–glycine 104. Residues proline 21–glycine 104 form an 8 X 9 AA approximate tandem repeat of [AP]-P-G-G-P-Y-G-G-P-P region. Residues proline 37–glycine 70 show a composition bias toward low complexity. The disordered stretch occupies residues proline 37 to glycine 113. The segment covering alanine 71–proline 81 has biased composition (gly residues). Positions tyrosine 93 to glycine 104 are enriched in low complexity. 5 consecutive EF-hand domains span residues glycine 113–serine 148, threonine 154–tryptophan 179, arginine 180–glutamine 215, leucine 216–methionine 252, and threonine 253–leucine 282. The Ca(2+) site is built by aspartate 126, aspartate 128, serine 130, tyrosine 132, and glutamate 137. 5 residues coordinate Ca(2+): aspartate 193, aspartate 195, serine 197, serine 199, and glutamate 204.

As to quaternary structure, heterodimer; heterodimerizes (via the EF-hand 5) with pdcd6.

It localises to the cytoplasm. It is found in the endoplasmic reticulum. The protein localises to the membrane. The protein resides in the cytoplasmic vesicle. Its subcellular location is the COPII-coated vesicle membrane. Its function is as follows. Calcium-binding protein that acts as an adapter that bridges unrelated proteins or stabilizes weak protein-protein complexes in response to calcium. Acts as a negative regulator of ER-Golgi transport. The polypeptide is Peflin (Xenopus laevis (African clawed frog)).